A 1203-amino-acid chain; its full sequence is DNA-directed RNA polymerase subunit beta (1203 aa).

The interval L1167–D1203 is disordered. Positions A1190–D1203 are enriched in polar residues.

This sequence belongs to the RNA polymerase beta chain family. In terms of assembly, the RNAP catalytic core consists of 2 alpha, 1 beta, 1 beta' and 1 omega subunit. When a sigma factor is associated with the core the holoenzyme is formed, which can initiate transcription.

It catalyses the reaction RNA(n) + a ribonucleoside 5'-triphosphate = RNA(n+1) + diphosphate. DNA-dependent RNA polymerase catalyzes the transcription of DNA into RNA using the four ribonucleoside triphosphates as substrates. In Levilactobacillus brevis (strain ATCC 367 / BCRC 12310 / CIP 105137 / JCM 1170 / LMG 11437 / NCIMB 947 / NCTC 947) (Lactobacillus brevis), this protein is DNA-directed RNA polymerase subunit beta.